The following is a 136-amino-acid chain: Large ribosomal subunit protein uL16c (136 aa).

Belongs to the universal ribosomal protein uL16 family. As to quaternary structure, part of the 50S ribosomal subunit.

The protein localises to the plastid. It localises to the chloroplast. The protein is Large ribosomal subunit protein uL16c of Chlamydomonas reinhardtii (Chlamydomonas smithii).